The chain runs to 239 residues: MTLKEFIIPAIDIKGGKVVRLYKGEFDKVKVYNENPIDMAKYFEDAGAEHIHVVDLDGALEGLPKNIKILESIVRSVNIPIEFGGGLRSFEAVKAVLDLGVERVVIGSLAYQNPEEFYKIVESFPNKVIVGIDAKDGKVAIKGWTEKTEVSPLEFAKKYDDLDIFGFLFTDVSRDGSMIGANVEATVELAKNLKHPVIASGGVGSLEDVIKLYEKREFGIFGVVVGKAIYEGKIDLKEI.

Asp-12 (proton acceptor) is an active-site residue. Asp-133 functions as the Proton donor in the catalytic mechanism.

It belongs to the HisA/HisF family.

It localises to the cytoplasm. The catalysed reaction is 1-(5-phospho-beta-D-ribosyl)-5-[(5-phospho-beta-D-ribosylamino)methylideneamino]imidazole-4-carboxamide = 5-[(5-phospho-1-deoxy-D-ribulos-1-ylimino)methylamino]-1-(5-phospho-beta-D-ribosyl)imidazole-4-carboxamide. It participates in amino-acid biosynthesis; L-histidine biosynthesis; L-histidine from 5-phospho-alpha-D-ribose 1-diphosphate: step 4/9. This Sulfurihydrogenibium sp. (strain YO3AOP1) protein is 1-(5-phosphoribosyl)-5-[(5-phosphoribosylamino)methylideneamino] imidazole-4-carboxamide isomerase.